The primary structure comprises 165 residues: 2-C-methyl-D-erythritol 2,4-cyclodiphosphate synthase (165 aa).

D9 and H11 together coordinate a divalent metal cation. 4-CDP-2-C-methyl-D-erythritol 2-phosphate contacts are provided by residues 9–11 (DVH) and 35–36 (HS). H43 is an a divalent metal cation binding site. 4-CDP-2-C-methyl-D-erythritol 2-phosphate is bound by residues 57–59 (DIG), 101–107 (AQAPKML), 133–136 (TTTE), F140, and R143.

The protein belongs to the IspF family. As to quaternary structure, homotrimer. A divalent metal cation is required as a cofactor.

It catalyses the reaction 4-CDP-2-C-methyl-D-erythritol 2-phosphate = 2-C-methyl-D-erythritol 2,4-cyclic diphosphate + CMP. The protein operates within isoprenoid biosynthesis; isopentenyl diphosphate biosynthesis via DXP pathway; isopentenyl diphosphate from 1-deoxy-D-xylulose 5-phosphate: step 4/6. In terms of biological role, involved in the biosynthesis of isopentenyl diphosphate (IPP) and dimethylallyl diphosphate (DMAPP), two major building blocks of isoprenoid compounds. Catalyzes the conversion of 4-diphosphocytidyl-2-C-methyl-D-erythritol 2-phosphate (CDP-ME2P) to 2-C-methyl-D-erythritol 2,4-cyclodiphosphate (ME-CPP) with a corresponding release of cytidine 5-monophosphate (CMP). In Pseudoalteromonas translucida (strain TAC 125), this protein is 2-C-methyl-D-erythritol 2,4-cyclodiphosphate synthase.